Here is an 887-residue protein sequence, read N- to C-terminus: Alanine--tRNA ligase (887 aa).

The Zn(2+) site is built by His-579, His-583, Cys-681, and His-685.

The protein belongs to the class-II aminoacyl-tRNA synthetase family. The cofactor is Zn(2+).

It is found in the cytoplasm. It catalyses the reaction tRNA(Ala) + L-alanine + ATP = L-alanyl-tRNA(Ala) + AMP + diphosphate. In terms of biological role, catalyzes the attachment of alanine to tRNA(Ala) in a two-step reaction: alanine is first activated by ATP to form Ala-AMP and then transferred to the acceptor end of tRNA(Ala). Also edits incorrectly charged Ser-tRNA(Ala) and Gly-tRNA(Ala) via its editing domain. The chain is Alanine--tRNA ligase from Flavobacterium psychrophilum (strain ATCC 49511 / DSM 21280 / CIP 103535 / JIP02/86).